The chain runs to 202 residues: Inosine triphosphate pyrophosphatase (202 aa).

Position 8–13 (8–13 (TGNANK)) interacts with ITP. Residue Glu55 participates in Mg(2+) binding. ITP-binding positions include Lys67, 83–84 (DT), Lys100, 159–162 (FGWD), Lys182, and 187–188 (HR).

It belongs to the HAM1 NTPase family. As to quaternary structure, homodimer. The cofactor is Mg(2+). Mn(2+) serves as cofactor.

It is found in the cytoplasm. The protein resides in the nucleus. It carries out the reaction ITP + H2O = IMP + diphosphate + H(+). The enzyme catalyses dITP + H2O = dIMP + diphosphate + H(+). The catalysed reaction is XTP + H2O = XMP + diphosphate + H(+). Functionally, pyrophosphatase that hydrolyzes non-canonical purine nucleotides such as inosine triphosphate (ITP), deoxyinosine triphosphate (dITP) or xanthosine 5'-triphosphate (XTP) to their respective monophosphate derivatives. The enzyme does not distinguish between the deoxy- and ribose forms. Probably excludes non-canonical purines from RNA and DNA precursor pools, thus preventing their incorporation into RNA and DNA and avoiding chromosomal lesions. The chain is Inosine triphosphate pyrophosphatase from Candida albicans (strain SC5314 / ATCC MYA-2876) (Yeast).